We begin with the raw amino-acid sequence, 118 residues long: Large ribosomal subunit protein bL20 (118 aa).

The protein belongs to the bacterial ribosomal protein bL20 family.

Binds directly to 23S ribosomal RNA and is necessary for the in vitro assembly process of the 50S ribosomal subunit. It is not involved in the protein synthesizing functions of that subunit. The chain is Large ribosomal subunit protein bL20 from Marinomonas sp. (strain MWYL1).